A 443-amino-acid polypeptide reads, in one-letter code: Phosphoglucosamine mutase (443 aa).

The active-site Phosphoserine intermediate is the serine 102. Mg(2+) is bound by residues serine 102, aspartate 241, aspartate 243, and aspartate 245. Serine 102 carries the phosphoserine modification.

This sequence belongs to the phosphohexose mutase family. The cofactor is Mg(2+). Post-translationally, activated by phosphorylation.

The catalysed reaction is alpha-D-glucosamine 1-phosphate = D-glucosamine 6-phosphate. Its function is as follows. Catalyzes the conversion of glucosamine-6-phosphate to glucosamine-1-phosphate. In Polaromonas sp. (strain JS666 / ATCC BAA-500), this protein is Phosphoglucosamine mutase.